The following is a 152-amino-acid chain: Snaclec anticoagulant protein subunit A (152 aa).

Residues 1–23 form the signal peptide; the sequence is MGRFIFVSFGLLVVYLSLSGTAA. A C-type lectin domain is found at 24–152; the sequence is DCSSSWSSYE…EQRDPFVCEA (129 aa). Intrachain disulfides connect cysteine 25–cysteine 36, cysteine 53–cysteine 150, and cysteine 125–cysteine 142. Ca(2+) is bound by residues serine 64, glutamate 66, and glutamate 70. Position 151 (glutamate 151) interacts with Ca(2+).

The protein belongs to the snaclec family. In terms of assembly, heterodimer of subunits A and B; disulfide-linked. Expressed by the venom gland.

The protein resides in the secreted. Anticoagulant protein which binds to the gamma-carboxyglutamic acid-domain regions of factors IX and factor X in the presence of calcium with a 1 to 1 stoichiometry. Also inhibits platelet aggregation by binding to platelet glycoprotein Ibalpha (GP1BA) and functioning as a blocker of vWF. Is devoid of hemorrhagic and lethal activities. Possesses antithrombotic and thrombolytic activities. Also hydrolyzes the Aalpha-chain of fibrinogen. Does not affect the Bbeta-chain and the gamma chain. The protein is Snaclec anticoagulant protein subunit A of Deinagkistrodon acutus (Hundred-pace snake).